The following is a 574-amino-acid chain: Probable amino-acid permease meu22 (574 aa).

Helical transmembrane passes span 69-89 (MIAIGGCVGTGLFVGSGNALA), 94-114 (ASILIAFAVIGTYVLFTTSAL), 173-193 (GPVSIWISVFYVIIIAINIWG), 202-222 (FFLSIMKVISVIGFVILSIII), 291-311 (IFWRIFLFYIVALFMLTLVVP), 391-411 (PIYAIAVTLLFGSIAYFTEAG), 412-432 (VGGALFGWLLSICGLSTTFIW), 470-490 (GVAMTILALIAQFYVAVFPIG), and 498-518 (FFQAYMAAPILIISFVAWKFF).

This sequence belongs to the amino acid-polyamine-organocation (APC) superfamily.

The protein localises to the membrane. This Schizosaccharomyces pombe (strain 972 / ATCC 24843) (Fission yeast) protein is Probable amino-acid permease meu22 (meu22).